Reading from the N-terminus, the 1111-residue chain is Protein NETWORKED 1C (1111 aa).

Residues 13 to 93 (YSWWWDSHNT…ERYNHATGVI (81 aa)) enclose the NAB domain. Coiled coils occupy residues 202–287 (SESE…KESS), 314–605 (ERAS…LISE), and 642–752 (KTIG…LESK). A disordered region spans residues 850 to 870 (TGGGRSMRKQDGGSGRMRKQS). Positions 943–1009 (NREVNKRRVL…EGEEAIEKLF (67 aa)) form a coiled coil.

This sequence belongs to the NET family.

In terms of biological role, plant-specific actin binding protein. May be part of a membrane-cytoskeletal adapter complex. The polypeptide is Protein NETWORKED 1C (Arabidopsis thaliana (Mouse-ear cress)).